Here is a 203-residue protein sequence, read N- to C-terminus: Peptidyl-tRNA hydrolase (203 aa).

Residue tyrosine 16 coordinates tRNA. The active-site Proton acceptor is histidine 21. Positions 68, 70, and 116 each coordinate tRNA.

This sequence belongs to the PTH family. In terms of assembly, monomer.

It is found in the cytoplasm. It catalyses the reaction an N-acyl-L-alpha-aminoacyl-tRNA + H2O = an N-acyl-L-amino acid + a tRNA + H(+). Its function is as follows. Hydrolyzes ribosome-free peptidyl-tRNAs (with 1 or more amino acids incorporated), which drop off the ribosome during protein synthesis, or as a result of ribosome stalling. Catalyzes the release of premature peptidyl moieties from peptidyl-tRNA molecules trapped in stalled 50S ribosomal subunits, and thus maintains levels of free tRNAs and 50S ribosomes. The sequence is that of Peptidyl-tRNA hydrolase from Nostoc sp. (strain PCC 7120 / SAG 25.82 / UTEX 2576).